The sequence spans 548 residues: Chaperonin GroEL (548 aa).

ATP contacts are provided by residues 30–33, K51, 87–91, G415, 479–481, and D495; these read TLGP, DGTTT, and NAA.

Belongs to the chaperonin (HSP60) family. In terms of assembly, forms a cylinder of 14 subunits composed of two heptameric rings stacked back-to-back. Interacts with the co-chaperonin GroES.

The protein resides in the cytoplasm. The catalysed reaction is ATP + H2O + a folded polypeptide = ADP + phosphate + an unfolded polypeptide.. Its function is as follows. Together with its co-chaperonin GroES, plays an essential role in assisting protein folding. The GroEL-GroES system forms a nano-cage that allows encapsulation of the non-native substrate proteins and provides a physical environment optimized to promote and accelerate protein folding. The polypeptide is Chaperonin GroEL (Methylibium petroleiphilum (strain ATCC BAA-1232 / LMG 22953 / PM1)).